Reading from the N-terminus, the 203-residue chain is N-(5'-phosphoribosyl)anthranilate isomerase (203 aa).

This sequence belongs to the TrpF family.

It catalyses the reaction N-(5-phospho-beta-D-ribosyl)anthranilate = 1-(2-carboxyphenylamino)-1-deoxy-D-ribulose 5-phosphate. Its pathway is amino-acid biosynthesis; L-tryptophan biosynthesis; L-tryptophan from chorismate: step 3/5. The chain is N-(5'-phosphoribosyl)anthranilate isomerase from Caldanaerobacter subterraneus subsp. tengcongensis (strain DSM 15242 / JCM 11007 / NBRC 100824 / MB4) (Thermoanaerobacter tengcongensis).